A 711-amino-acid polypeptide reads, in one-letter code: 1,4-alpha-glucan branching enzyme GlgB (711 aa).

D392 (nucleophile) is an active-site residue. E443 serves as the catalytic Proton donor.

Belongs to the glycosyl hydrolase 13 family. GlgB subfamily. In terms of assembly, monomer.

It carries out the reaction Transfers a segment of a (1-&gt;4)-alpha-D-glucan chain to a primary hydroxy group in a similar glucan chain.. It functions in the pathway glycan biosynthesis; glycogen biosynthesis. Catalyzes the formation of the alpha-1,6-glucosidic linkages in glycogen by scission of a 1,4-alpha-linked oligosaccharide from growing alpha-1,4-glucan chains and the subsequent attachment of the oligosaccharide to the alpha-1,6 position. The polypeptide is 1,4-alpha-glucan branching enzyme GlgB (Corynebacterium jeikeium (strain K411)).